A 440-amino-acid chain; its full sequence is MDTDILKMQDREVFDAIAGETVRQMETLELIASENFTSRAVMQACGSVMTNKYAEGYPGKRYYGGCEFVDIAEDLARERARKLFGCEYVNVQPHSGSSANMAVLFSVLKPGDRIMGLDLSHGGHLTHGSSVNFSGQMFDARSYGVDRETGIIDMNKVEEMALDFKPRLIICGASAYSQGFDFKAFREIADKVGAFLMADIAHPAGLIAAGLLTDPMPHCHFVTTTTHKTLRGPRGGMIMMGKDFENPMGITIKTKNGPRVKMMSEVMDAEVMPGIQGGPLMHIIAGKAVAFGEALRPEFREYAVQVRKNAASMAERFTSLGYNIVSGGTKNHLMLLDLRNKDVNGKVAENLLHDAGITVNKNMVPFDDKSPFVTSGIRIGTAAMTTRGMKEADATLIAELIDRVITGAAESTIAATCKDVKAEIRSLCLQNPLEGYGVTP.

Residues L119 and 123–125 (GHL) contribute to the (6S)-5,6,7,8-tetrahydrofolate site. An N6-(pyridoxal phosphate)lysine modification is found at K228. 370–372 (SPF) contacts (6S)-5,6,7,8-tetrahydrofolate.

It belongs to the SHMT family. As to quaternary structure, homodimer. The cofactor is pyridoxal 5'-phosphate.

The protein localises to the cytoplasm. It catalyses the reaction (6R)-5,10-methylene-5,6,7,8-tetrahydrofolate + glycine + H2O = (6S)-5,6,7,8-tetrahydrofolate + L-serine. Its pathway is one-carbon metabolism; tetrahydrofolate interconversion. The protein operates within amino-acid biosynthesis; glycine biosynthesis; glycine from L-serine: step 1/1. Its function is as follows. Catalyzes the reversible interconversion of serine and glycine with tetrahydrofolate (THF) serving as the one-carbon carrier. This reaction serves as the major source of one-carbon groups required for the biosynthesis of purines, thymidylate, methionine, and other important biomolecules. Also exhibits THF-independent aldolase activity toward beta-hydroxyamino acids, producing glycine and aldehydes, via a retro-aldol mechanism. The chain is Serine hydroxymethyltransferase from Chlorobium luteolum (strain DSM 273 / BCRC 81028 / 2530) (Pelodictyon luteolum).